We begin with the raw amino-acid sequence, 167 residues long: Crossover junction endodeoxyribonuclease RuvC (167 aa).

Catalysis depends on residues aspartate 11, glutamate 71, and aspartate 143. Mg(2+) contacts are provided by aspartate 11, glutamate 71, and aspartate 143.

Belongs to the RuvC family. Homodimer which binds Holliday junction (HJ) DNA. The HJ becomes 2-fold symmetrical on binding to RuvC with unstacked arms; it has a different conformation from HJ DNA in complex with RuvA. In the full resolvosome a probable DNA-RuvA(4)-RuvB(12)-RuvC(2) complex forms which resolves the HJ. Requires Mg(2+) as cofactor.

It is found in the cytoplasm. The enzyme catalyses Endonucleolytic cleavage at a junction such as a reciprocal single-stranded crossover between two homologous DNA duplexes (Holliday junction).. Its function is as follows. The RuvA-RuvB-RuvC complex processes Holliday junction (HJ) DNA during genetic recombination and DNA repair. Endonuclease that resolves HJ intermediates. Cleaves cruciform DNA by making single-stranded nicks across the HJ at symmetrical positions within the homologous arms, yielding a 5'-phosphate and a 3'-hydroxyl group; requires a central core of homology in the junction. The consensus cleavage sequence is 5'-(A/T)TT(C/G)-3'. Cleavage occurs on the 3'-side of the TT dinucleotide at the point of strand exchange. HJ branch migration catalyzed by RuvA-RuvB allows RuvC to scan DNA until it finds its consensus sequence, where it cleaves and resolves the cruciform DNA. In Bartonella bacilliformis (strain ATCC 35685 / KC583 / Herrer 020/F12,63), this protein is Crossover junction endodeoxyribonuclease RuvC.